Here is a 910-residue protein sequence, read N- to C-terminus: DNA mismatch repair protein MutS (910 aa).

Residue 607 to 614 (GPNMAGKS) coordinates ATP.

This sequence belongs to the DNA mismatch repair MutS family.

In terms of biological role, this protein is involved in the repair of mismatches in DNA. It is possible that it carries out the mismatch recognition step. This protein has a weak ATPase activity. In Geobacillus thermodenitrificans (strain NG80-2), this protein is DNA mismatch repair protein MutS.